A 635-amino-acid chain; its full sequence is Multiple inositol polyphosphate phosphatase 1 (635 aa).

The first 23 residues, 1–23 (MMVKIKNIIILFCIFGLLSNVSS), serve as a signal peptide directing secretion. The Extracellular portion of the chain corresponds to 24-565 (LSSSSSSSQS…GNDSHSKKSS (542 aa)). Residues 66 to 102 (KNGDSNSQGDGSSGNSNSNSNSNSNSNSNSDSSNEPP) form a disordered region. The segment covering 67 to 99 (NGDSNSQGDGSSGNSNSNSNSNSNSNSNSDSSN) has biased composition (low complexity). H116 is an active-site residue. Low complexity predominate over residues 380-421 (SSSSSSSSSSNNGDNSGSNGSSGSGSSTSTSSNDNGSTNNND). The segment at 380 to 425 (SSSSSSSSSSNNGDNSGSNGSSGSGSSTSTSSNDNGSTNNNDNKVE) is disordered. Residues 566–586 (YFLAIFIPITFLVGGTIGGIF) form a helical membrane-spanning segment. Over 587-635 (TYFSYEKIMQVKNRKKLTQYGNDEFISSPKSKSFSFKPTKFDSRSPLIQ) the chain is Cytoplasmic. A compositionally biased stretch (low complexity) spans 614 to 624 (SPKSKSFSFKP). Positions 614-635 (SPKSKSFSFKPTKFDSRSPLIQ) are disordered.

The protein belongs to the histidine acid phosphatase family. MINPP1 subfamily.

It is found in the membrane. It catalyses the reaction 1D-myo-inositol hexakisphosphate + H2O = 1D-myo-inositol 1,2,4,5,6-pentakisphosphate + phosphate. The catalysed reaction is 1D-myo-inositol 1,2,4,5,6-pentakisphosphate + H2O = 1D-myo-inositol 1,2,5,6-tetrakisphosphate + phosphate. It carries out the reaction 1D-myo-inositol 1,2,5,6-tetrakisphosphate + H2O = 1D-myo-inositol 1,2,6-trisphosphate + phosphate. The enzyme catalyses 1D-myo-inositol 1,2,6-trisphosphate + H2O = 1D-myo-inositol 1,2-bisphosphate + phosphate. It catalyses the reaction 1D-myo-inositol 1,2-bisphosphate + H2O = 1D-myo-inositol 2-phosphate + phosphate. The catalysed reaction is (2R)-2,3-bisphosphoglycerate + H2O = (2R)-2-phosphoglycerate + phosphate. Functionally, probable multiple inositol polyphosphate phosphatase that hydrolyzes 1D-myo-inositol 1,3,4,5,6-pentakisphosphate (InsP5[2OH]) and 1D-myo-inositol hexakisphosphate (InsP6) to a range of less phosphorylated inositol phosphates. This regulates the availability of these various small molecule second messengers and metal chelators which control many aspects of cell physiology. May have a dual substrate specificity, and function as a 2,3-bisphosphoglycerate 3-phosphatase hydrolyzing 2,3-bisphosphoglycerate to 2-phosphoglycerate. 2,3-bisphosphoglycerate (BPG) is formed as part of the Rapoport-Luebering glycolytic bypass. The sequence is that of Multiple inositol polyphosphate phosphatase 1 (mipp1) from Dictyostelium discoideum (Social amoeba).